The following is a 184-amino-acid chain: Ras-related protein Rap-1A (184 aa).

GTP contacts are provided by residues 10-18 (GSGGVGKSA), 29-35 (VEKYDPT), Gly-60, and 116-119 (NKCD). Residues 32–40 (YDPTIEDSY) carry the Effector region motif. Cys-181 is subject to Cysteine methyl ester. A lipid anchor (S-geranylgeranyl cysteine) is attached at Cys-181. Residues 182–184 (LLL) constitute a propeptide, removed in mature form.

It belongs to the small GTPase superfamily. Ras family. Found in a complex, at least composed of ITGB1BP1, KRIT1 and RAP1A. Interacts (active GTP-bound form preferentially) with KRIT1 (via C-terminus FERM domain); the interaction does not induce the opening conformation of KRIT1. Found in a complex composed of CDH1, RAP1A and PKP3; PKP3 acts as a scaffold protein within the complex, the complex is required for CDH1 localization to mature desmosome cell junctions. In its GTP-bound form interacts with PLCE1 and RADIL. Interacts with SGSM1, SGSM2 and SGSM3. Interacts (via GTP-bound active form) with RAPGEF2 (via Ras-associating domain). Interacts with TBC1D21. Interacts with RAP1GDS1.

Its subcellular location is the cell membrane. It is found in the cytoplasm. The protein localises to the perinuclear region. It localises to the cell junction. The protein resides in the early endosome. It catalyses the reaction GTP + H2O = GDP + phosphate + H(+). With respect to regulation, activated by guanine nucleotide-exchange factors (GEF) EPAC and EPAC2 in a cAMP-dependent manner, and GFR. In terms of biological role, counteracts the mitogenic function of Ras, at least partly because it can interact with Ras GAPs and RAF in a competitive manner. Together with ITGB1BP1, regulates KRIT1 localization to microtubules and membranes. Plays a role in nerve growth factor (NGF)-induced neurite outgrowth. Plays a role in the regulation of embryonic blood vessel formation. Involved in the establishment of basal endothelial barrier function. Facilitates the progressive accumulation of CDH1 at mature desmosome junctions via cAMP-dependent signaling and its interaction with PKP3. May be involved in the regulation of the vascular endothelial growth factor receptor KDR expression at endothelial cell-cell junctions. The chain is Ras-related protein Rap-1A (RAP1A) from Bos taurus (Bovine).